Reading from the N-terminus, the 543-residue chain is Sensor histidine kinase DcuS (543 aa).

Over 1 to 20 the chain is Cytoplasmic; that stretch reads MRHSLPYRMLRKRPMKLSTT. Residues 21-41 form a helical membrane-spanning segment; the sequence is VILMVSAVLFSVLLVVHLIYF. Topologically, residues 42-181 are periplasmic; that stretch reads SQISDMTRDG…VTQQINDSRW (140 aa). Residues 107-110, lysine 121, 140-142, and arginine 147 each bind (R)-malate; these read RYSH and GFL. Residues 182-202 traverse the membrane as a helical segment; that stretch reads SIIWSVLFGMLVGLIGTCILV. The Cytoplasmic portion of the chain corresponds to 203 to 543; sequence KVLKKILFGL…IPWDGERSNR (341 aa). Positions 212-323 constitute a PAS domain; sequence LEPYEISTLF…IIGAISTFRD (112 aa). The Histidine kinase domain occupies 346-538; the sequence is ERSHEFMNKL…QFFVQIPWDG (193 aa). A Phosphohistidine; by autocatalysis modification is found at histidine 349.

Homodimer. In terms of processing, autophosphorylated. The phosphoryl group is rapidly transferred to DcuR.

It is found in the cell inner membrane. The catalysed reaction is ATP + protein L-histidine = ADP + protein N-phospho-L-histidine.. In terms of biological role, member of the two-component regulatory system DcuR/DcuS. Involved in the C4-dicarboxylate-stimulated regulation of the genes encoding the anaerobic fumarate respiratory system (frdABCD; nuoAN; dcuB; sdhCDAB; etc.). Weakly regulates the aerobic C4-dicarboxylate transporter dctA. Activates DcuR by phosphorylation. This Escherichia coli O157:H7 protein is Sensor histidine kinase DcuS (dcuS).